A 282-amino-acid polypeptide reads, in one-letter code: Acetyl-coenzyme A carboxylase carboxyl transferase subunit beta (282 aa).

A CoA carboxyltransferase N-terminal domain is found at 26–282 (QWVKCPETGE…IIRLLNLLME (257 aa)).

Belongs to the AccD/PCCB family. In terms of assembly, acetyl-CoA carboxylase is a heterohexamer composed of biotin carboxyl carrier protein (AccB), biotin carboxylase (AccC) and two subunits each of ACCase subunit alpha (AccA) and ACCase subunit beta (AccD).

The protein localises to the cytoplasm. The enzyme catalyses N(6)-carboxybiotinyl-L-lysyl-[protein] + acetyl-CoA = N(6)-biotinyl-L-lysyl-[protein] + malonyl-CoA. It functions in the pathway lipid metabolism; malonyl-CoA biosynthesis; malonyl-CoA from acetyl-CoA: step 1/1. Its function is as follows. Component of the acetyl coenzyme A carboxylase (ACC) complex. Biotin carboxylase (BC) catalyzes the carboxylation of biotin on its carrier protein (BCCP) and then the CO(2) group is transferred by the transcarboxylase to acetyl-CoA to form malonyl-CoA. In Salinibacter ruber (strain DSM 13855 / M31), this protein is Acetyl-coenzyme A carboxylase carboxyl transferase subunit beta.